Reading from the N-terminus, the 434-residue chain is Trigger factor (434 aa).

Positions 163 to 248 constitute a PPIase FKBP-type domain; sequence GDTAVIDFAG…VHDIKRKELP (86 aa).

It belongs to the FKBP-type PPIase family. Tig subfamily.

It localises to the cytoplasm. It catalyses the reaction [protein]-peptidylproline (omega=180) = [protein]-peptidylproline (omega=0). Involved in protein export. Acts as a chaperone by maintaining the newly synthesized protein in an open conformation. Functions as a peptidyl-prolyl cis-trans isomerase. This Shouchella clausii (strain KSM-K16) (Alkalihalobacillus clausii) protein is Trigger factor.